The chain runs to 225 residues: Uridylate kinase (225 aa).

9 to 10 (GS) is an ATP binding site. A UMP-binding site is contributed by Gly46. ATP is bound by residues Gly47 and Arg51. Residues Asp67 and 115–121 (THPAHTT) contribute to the UMP site. Positions 141, 142, 147, and 150 each coordinate ATP.

Belongs to the UMP kinase family. Homohexamer.

It is found in the cytoplasm. The catalysed reaction is UMP + ATP = UDP + ADP. Its pathway is pyrimidine metabolism; CTP biosynthesis via de novo pathway; UDP from UMP (UMPK route): step 1/1. With respect to regulation, inhibited by UTP. Catalyzes the reversible phosphorylation of UMP to UDP. In Methanococcus aeolicus (strain ATCC BAA-1280 / DSM 17508 / OCM 812 / Nankai-3), this protein is Uridylate kinase.